The primary structure comprises 431 residues: 3-phosphoshikimate 1-carboxyvinyltransferase (431 aa).

Lysine 26, serine 27, and arginine 31 together coordinate 3-phosphoshikimate. Residue lysine 26 participates in phosphoenolpyruvate binding. The phosphoenolpyruvate site is built by glycine 99 and arginine 127. 3-phosphoshikimate contacts are provided by serine 170, serine 171, glutamine 172, serine 199, glutamate 314, and histidine 343. Residue glutamine 172 coordinates phosphoenolpyruvate. Glutamate 314 acts as the Proton acceptor in catalysis. Phosphoenolpyruvate-binding residues include arginine 347, arginine 388, and lysine 413.

It belongs to the EPSP synthase family. In terms of assembly, monomer.

Its subcellular location is the cytoplasm. The catalysed reaction is 3-phosphoshikimate + phosphoenolpyruvate = 5-O-(1-carboxyvinyl)-3-phosphoshikimate + phosphate. It participates in metabolic intermediate biosynthesis; chorismate biosynthesis; chorismate from D-erythrose 4-phosphate and phosphoenolpyruvate: step 6/7. In terms of biological role, catalyzes the transfer of the enolpyruvyl moiety of phosphoenolpyruvate (PEP) to the 5-hydroxyl of shikimate-3-phosphate (S3P) to produce enolpyruvyl shikimate-3-phosphate and inorganic phosphate. The polypeptide is 3-phosphoshikimate 1-carboxyvinyltransferase (Mycobacterium marinum (strain ATCC BAA-535 / M)).